A 60-amino-acid chain; its full sequence is uncharacterized protein (60 aa).

This is an uncharacterized protein from Homo sapiens (Human).